Reading from the N-terminus, the 795-residue chain is Protein ROOT HAIR DEFECTIVE 3 homolog 1 (795 aa).

Residues 1–682 (MDADKSEGCC…EANRRGNNWL (682 aa)) are Cytoplasmic-facing. The 216-residue stretch at 39–254 (GLSYAVVSIM…IAPGGLAGDR (216 aa)) folds into the GB1/RHD3-type G domain. 49-56 (GPQSSGKS) serves as a coordination point for GTP. The stretch at 218–244 (VALSSYEEKEEQFKEQIASLRQRFMHS) forms a coiled coil. A helical membrane pass occupies residues 683 to 703 (PPPWAILALIVLGFNEFMTLL). The Lumenal segment spans residues 704–706 (RNP). A helical transmembrane segment spans residues 707-727 (LYLGVMFVAFLLAKALWTQLD). Residues 728–795 (IPGEFRNGAL…PDHKSSSKED (68 aa)) are Cytoplasmic-facing. Residues 761-795 (QGEDPPAANPENRRSSNNTSSSENPPDHKSSSKED) form a disordered region. Residues 775–784 (SSNNTSSSEN) show a composition bias toward low complexity. Residues 785-795 (PPDHKSSSKED) show a composition bias toward basic and acidic residues.

Belongs to the TRAFAC class dynamin-like GTPase superfamily. GB1/RHD3 GTPase family. RHD3 subfamily. In terms of tissue distribution, specifically expressed in flowers.

Its subcellular location is the endoplasmic reticulum membrane. Probable GTP-binding protein that may be involved in cell development. The chain is Protein ROOT HAIR DEFECTIVE 3 homolog 1 from Arabidopsis thaliana (Mouse-ear cress).